Reading from the N-terminus, the 171-residue chain is Adenine phosphoribosyltransferase (171 aa).

This sequence belongs to the purine/pyrimidine phosphoribosyltransferase family. As to quaternary structure, homodimer.

The protein resides in the cytoplasm. It catalyses the reaction AMP + diphosphate = 5-phospho-alpha-D-ribose 1-diphosphate + adenine. It functions in the pathway purine metabolism; AMP biosynthesis via salvage pathway; AMP from adenine: step 1/1. Its function is as follows. Catalyzes a salvage reaction resulting in the formation of AMP, that is energically less costly than de novo synthesis. This chain is Adenine phosphoribosyltransferase, found in Mycoplasma mobile (strain ATCC 43663 / 163K / NCTC 11711) (Mesomycoplasma mobile).